The primary structure comprises 230 residues: 3-beta-hydroxysteroid-Delta(8),Delta(7)-isomerase (230 aa).

At Thr2 the chain carries N-acetylthreonine. 4 consecutive transmembrane segments (helical) span residues Ser29–Leu49, Leu66–Tyr86, Met121–Leu141, and Phe185–Leu205. One can recognise an EXPERA domain in the interval Gly61–Val204.

The protein belongs to the EBP family.

The protein resides in the endoplasmic reticulum membrane. Its subcellular location is the nucleus envelope. The protein localises to the cytoplasmic vesicle. It carries out the reaction lathosterol = 5alpha-cholest-8-en-3beta-ol. It catalyses the reaction zymosterol = 5alpha-cholesta-7,24-dien-3beta-ol. The catalysed reaction is 5,6alpha-epoxy-5alpha-cholestan-3beta-ol + H2O = 5alpha-cholestane-3beta,5,6beta-triol. The enzyme catalyses 5,6beta-epoxy-5beta-cholestan-3beta-ol + H2O = 5alpha-cholestane-3beta,5,6beta-triol. Its pathway is steroid biosynthesis; cholesterol biosynthesis. Functionally, isomerase that catalyzes the conversion of Delta(8)-sterols to their corresponding Delta(7)-isomers. In terms of biological role, component of the microsomal antiestrogen binding site (AEBS), a multiproteic complex at the ER membrane that consists of an association between EBP and 7-dehydrocholesterol reductase/DHCR7. This complex is responsible for cholesterol-5,6-epoxide hydrolase (ChEH) activity, which consists in the hydration of cholesterol-5,6-epoxides (5,6-EC) into cholestane-3beta,5alpha,6beta-triol (CT). The precise role of each component of this complex has not been described yet. The polypeptide is 3-beta-hydroxysteroid-Delta(8),Delta(7)-isomerase (Mus musculus (Mouse)).